Consider the following 224-residue polypeptide: ATP synthase subunit a (224 aa).

6 helical membrane passes run 17–37 (LSLN…IYWL), 72–92 (IFIS…FPYI), 99–119 (LTLT…YGWI), 125–145 (MFAH…MVCI), 170–190 (LLLT…VTFL), and 195–215 (IALL…FAVL).

It belongs to the ATPase A chain family. F-type ATPases have 2 components, CF(1) - the catalytic core - and CF(0) - the membrane proton channel. CF(1) has five subunits: alpha(3), beta(3), gamma(1), delta(1), epsilon(1). CF(0) has three main subunits: a, b and c.

It is found in the mitochondrion inner membrane. Mitochondrial membrane ATP synthase (F(1)F(0) ATP synthase or Complex V) produces ATP from ADP in the presence of a proton gradient across the membrane which is generated by electron transport complexes of the respiratory chain. F-type ATPases consist of two structural domains, F(1) - containing the extramembraneous catalytic core and F(0) - containing the membrane proton channel, linked together by a central stalk and a peripheral stalk. During catalysis, ATP synthesis in the catalytic domain of F(1) is coupled via a rotary mechanism of the central stalk subunits to proton translocation. Key component of the proton channel; it may play a direct role in the translocation of protons across the membrane. The protein is ATP synthase subunit a (mt:ATPase6) of Drosophila simulans (Fruit fly).